We begin with the raw amino-acid sequence, 188 residues long: D-glycero-beta-D-manno-heptose-1,7-bisphosphate 7-phosphatase (188 aa).

The Zn(2+) site is built by C92, H94, C107, and C109.

Belongs to the GmhB family.

Its subcellular location is the cytoplasm. The catalysed reaction is D-glycero-beta-D-manno-heptose 1,7-bisphosphate + H2O = D-glycero-beta-D-manno-heptose 1-phosphate + phosphate. It participates in nucleotide-sugar biosynthesis; ADP-L-glycero-beta-D-manno-heptose biosynthesis; ADP-L-glycero-beta-D-manno-heptose from D-glycero-beta-D-manno-heptose 7-phosphate: step 2/4. Its pathway is bacterial outer membrane biogenesis; LPS core biosynthesis. Functionally, converts the D-glycero-beta-D-manno-heptose 1,7-bisphosphate intermediate into D-glycero-beta-D-manno-heptose 1-phosphate by removing the phosphate group at the C-7 position. The protein is D-glycero-beta-D-manno-heptose-1,7-bisphosphate 7-phosphatase (gmhB1) of Photorhabdus laumondii subsp. laumondii (strain DSM 15139 / CIP 105565 / TT01) (Photorhabdus luminescens subsp. laumondii).